A 358-amino-acid polypeptide reads, in one-letter code: MKPATAKISSLALKHNLELIHQKAPDSKMIAIVKANAYGHGVEFVASTVEEQVDGFGVARIEEALTLRSKGIIKPILLLEGFFSAKDLPVIAVNNIQTVVHNREQLEALKQTKLPNPIKVWLKIDTGMHRLGVALDEVEDYVEELKKCANVEPLIGYVSHFSRADELDSDYTRIQLNRFLQATEDKGGPRCIAASGGILFWPDSHLEWIRPGIIMYGVSPTDTPSSEFGLIPVMTLTSSLIAVRRHKAGEPVGYGGTWISKKDTKIGVIAIGYGDGYPRNIPSGTPVYINGRIVPIVGRVSMDMITVDLGEDCTDKVGDEVILWGKELPIETVAKHMGILSYELMTKLTPRVLTEYAD.

The active-site Proton acceptor; specific for D-alanine is the Lys34. Lys34 is modified (N6-(pyridoxal phosphate)lysine). Residue Arg130 coordinates substrate. Catalysis depends on Tyr254, which acts as the Proton acceptor; specific for L-alanine. Met302 contributes to the substrate binding site.

Belongs to the alanine racemase family. Pyridoxal 5'-phosphate is required as a cofactor.

The catalysed reaction is L-alanine = D-alanine. It participates in amino-acid biosynthesis; D-alanine biosynthesis; D-alanine from L-alanine: step 1/1. In terms of biological role, catalyzes the interconversion of L-alanine and D-alanine. May also act on other amino acids. This is Alanine racemase (alr) from Actinobacillus succinogenes (strain ATCC 55618 / DSM 22257 / CCUG 43843 / 130Z).